The sequence spans 251 residues: Hydroxyacylglutathione hydrolase (251 aa).

Positions 53, 55, 57, 58, 110, 127, and 165 each coordinate Zn(2+).

It belongs to the metallo-beta-lactamase superfamily. Glyoxalase II family. As to quaternary structure, monomer. Requires Zn(2+) as cofactor.

It carries out the reaction an S-(2-hydroxyacyl)glutathione + H2O = a 2-hydroxy carboxylate + glutathione + H(+). It participates in secondary metabolite metabolism; methylglyoxal degradation; (R)-lactate from methylglyoxal: step 2/2. Its function is as follows. Thiolesterase that catalyzes the hydrolysis of S-D-lactoyl-glutathione to form glutathione and D-lactic acid. The sequence is that of Hydroxyacylglutathione hydrolase from Erwinia tasmaniensis (strain DSM 17950 / CFBP 7177 / CIP 109463 / NCPPB 4357 / Et1/99).